We begin with the raw amino-acid sequence, 155 residues long: Peptidyl-prolyl cis-trans isomerase ppi1 (155 aa).

In terms of domain architecture, PPIase cyclophilin-type spans 1–154 (MANVELQTSL…EPLKIIKAVA (154 aa)).

The protein belongs to the cyclophilin-type PPIase family. PPIL1 subfamily. Interacts with cwf13/snw1.

The enzyme catalyses [protein]-peptidylproline (omega=180) = [protein]-peptidylproline (omega=0). PPIases accelerate the folding of proteins. It catalyzes the cis-trans isomerization of proline imidic peptide bonds in oligopeptides. This Schizosaccharomyces pombe (strain 972 / ATCC 24843) (Fission yeast) protein is Peptidyl-prolyl cis-trans isomerase ppi1 (ppi1).